Here is a 202-residue protein sequence, read N- to C-terminus: Ribonuclease HII (202 aa).

An RNase H type-2 domain is found at 11 to 200 (GLIAGVDEVG…VRKAIEEFNR (190 aa)). Positions 17, 18, and 109 each coordinate a divalent metal cation.

This sequence belongs to the RNase HII family. Mn(2+) is required as a cofactor. Mg(2+) serves as cofactor.

It localises to the cytoplasm. It carries out the reaction Endonucleolytic cleavage to 5'-phosphomonoester.. Its function is as follows. Endonuclease that specifically degrades the RNA of RNA-DNA hybrids. The sequence is that of Ribonuclease HII from Actinobacillus succinogenes (strain ATCC 55618 / DSM 22257 / CCUG 43843 / 130Z).